A 400-amino-acid chain; its full sequence is Outer membrane protein alpha (400 aa).

Positions 1 to 20 are cleaved as a signal peptide; that stretch reads MKRVLLTVAMLSVFFSAMFA. The SLH domain maps to 21-81; it reads FFPDVPKDHW…DFIEQKMLAG (61 aa). Residues 85-379 are a coiled coil; that stretch reads DLAQVVGNLS…ESVKAYNRNL (295 aa). 3 repeat units span residues 208–232, 251–275, and 326–350. The 3 X 25 AA approximate repeat stretch occupies residues 208-350; the sequence is VNLHEKDIIN…SSLEEDLNMK (143 aa). The chain crosses the membrane as a helical span at residues 380-400; the sequence is SILTGAFFGILGLILIAISGK.

As to quaternary structure, homotetramer.

The protein localises to the cell outer membrane. Functionally, links the outer membrane to the inner membrane. Long fibrous protein that could serve to separate the two membranes. The polypeptide is Outer membrane protein alpha (omp-alpha) (Thermotoga maritima (strain ATCC 43589 / DSM 3109 / JCM 10099 / NBRC 100826 / MSB8)).